We begin with the raw amino-acid sequence, 182 residues long: UPF0690 protein C1orf52 homolog (182 aa).

The tract at residues 1 to 61 (MAAEEKDPLS…AEKRLPGPDE (61 aa)) is disordered. The segment covering 23–32 (SDEEDNSEPE) has biased composition (acidic residues). Residues 51–61 (KAEKRLPGPDE) show a composition bias toward basic and acidic residues. Thr67 is modified (phosphothreonine). Tyr132 carries the phosphotyrosine modification. Positions 132–182 (YEDNGDDAPQNAKKARLLPEGEETVESDDEKDEHTSKKRKIELGEPTKKKK) are disordered. The span at 151–162 (EGEETVESDDEK) shows a compositional bias: acidic residues. Residue Ser158 is modified to Phosphoserine. The span at 172–182 (IELGEPTKKKK) shows a compositional bias: basic and acidic residues.

This sequence belongs to the UPF0690 family.

The protein is UPF0690 protein C1orf52 homolog of Bos taurus (Bovine).